We begin with the raw amino-acid sequence, 135 residues long: Ribosome-binding factor A (135 aa).

The protein belongs to the RbfA family. As to quaternary structure, monomer. Binds 30S ribosomal subunits, but not 50S ribosomal subunits or 70S ribosomes.

The protein localises to the cytoplasm. In terms of biological role, one of several proteins that assist in the late maturation steps of the functional core of the 30S ribosomal subunit. Associates with free 30S ribosomal subunits (but not with 30S subunits that are part of 70S ribosomes or polysomes). Required for efficient processing of 16S rRNA. May interact with the 5'-terminal helix region of 16S rRNA. The polypeptide is Ribosome-binding factor A (Hyphomonas neptunium (strain ATCC 15444)).